The sequence spans 227 residues: ATP synthase F(0) complex subunit a (227 aa).

Helical transmembrane passes span 14–34 (LLGI…FPTP), 69–89 (WATI…LGLL), 99–119 (LSLN…IGML), 137–157 (LLIP…PLAL), 180–200 (FVLI…LFLL), and 202–222 (ILEV…LSLY).

It belongs to the ATPase A chain family. Component of the ATP synthase complex composed at least of ATP5F1A/subunit alpha, ATP5F1B/subunit beta, ATP5MC1/subunit c (homooctomer), MT-ATP6/subunit a, MT-ATP8/subunit 8, ATP5ME/subunit e, ATP5MF/subunit f, ATP5MG/subunit g, ATP5MK/subunit k, ATP5MJ/subunit j, ATP5F1C/subunit gamma, ATP5F1D/subunit delta, ATP5F1E/subunit epsilon, ATP5PF/subunit F6, ATP5PB/subunit b, ATP5PD/subunit d, ATP5PO/subunit OSCP. ATP synthase complex consists of a soluble F(1) head domain (subunits alpha(3) and beta(3)) - the catalytic core - and a membrane F(0) domain - the membrane proton channel (subunits c, a, 8, e, f, g, k and j). These two domains are linked by a central stalk (subunits gamma, delta, and epsilon) rotating inside the F1 region and a stationary peripheral stalk (subunits F6, b, d, and OSCP). Interacts with DNAJC30; interaction is direct.

It is found in the mitochondrion inner membrane. It carries out the reaction H(+)(in) = H(+)(out). Functionally, subunit a, of the mitochondrial membrane ATP synthase complex (F(1)F(0) ATP synthase or Complex V) that produces ATP from ADP in the presence of a proton gradient across the membrane which is generated by electron transport complexes of the respiratory chain. ATP synthase complex consist of a soluble F(1) head domain - the catalytic core - and a membrane F(1) domain - the membrane proton channel. These two domains are linked by a central stalk rotating inside the F(1) region and a stationary peripheral stalk. During catalysis, ATP synthesis in the catalytic domain of F(1) is coupled via a rotary mechanism of the central stalk subunits to proton translocation. With the subunit c (ATP5MC1), forms the proton-conducting channel in the F(0) domain, that contains two crucial half-channels (inlet and outlet) that facilitate proton movement from the mitochondrial intermembrane space (IMS) into the matrix. Protons are taken up via the inlet half-channel and released through the outlet half-channel, following a Grotthuss mechanism. In Squalus acanthias (Spiny dogfish), this protein is ATP synthase F(0) complex subunit a.